Reading from the N-terminus, the 502-residue chain is Zinc finger protein 488 (502 aa).

An SET domain is found at 8–130 (RSLWTNDSKI…EGEELLVWYD (123 aa)). An S-adenosyl-L-methionine-binding site is contributed by tyrosine 129. A C2H2-type 1; atypical zinc finger spans residues 151 to 174 (YTCTRCGQAFKNENPFLAHCRFLC). Disordered stretches follow at residues 267–303 (SEPTDNAQTNESKISKNSAFTEVRKAPEPSNPEKSSR) and 338–361 (PSKRALAEAQNPSPPDTDNSLDSF). Residues 269–286 (PTDNAQTNESKISKNSAF) are compositionally biased toward polar residues. C2H2-type zinc fingers lie at residues 438–460 (NWCAKCNLSFRMTSDLVFHMRSH) and 479–501 (LTCPICHEYFRERHHLSRHMTSH).

The protein belongs to the krueppel C2H2-type zinc-finger protein family. As to expression, expressed in pMN progenitors and oligodendrocyte lineage cells in the embryo with expression declining in oligodendrocytes undergoing differentiation.

It is found in the nucleus. Functionally, transcriptional repressor. May have histone methyltransferase activity. Negatively regulates shh signaling activity in pMN progenitor cells which prevents their switch from motor neuron to oligodendrocyte precursor cell production. Independently of shh activity, also regulates oligodendrocyte formation. The protein is Zinc finger protein 488 of Danio rerio (Zebrafish).